Reading from the N-terminus, the 153-residue chain is 3-hydroxyacyl-[acyl-carrier-protein] dehydratase FabZ (153 aa).

Residue His59 is part of the active site.

Belongs to the thioester dehydratase family. FabZ subfamily.

The protein resides in the cytoplasm. The enzyme catalyses a (3R)-hydroxyacyl-[ACP] = a (2E)-enoyl-[ACP] + H2O. In terms of biological role, involved in unsaturated fatty acids biosynthesis. Catalyzes the dehydration of short chain beta-hydroxyacyl-ACPs and long chain saturated and unsaturated beta-hydroxyacyl-ACPs. This Thermosynechococcus vestitus (strain NIES-2133 / IAM M-273 / BP-1) protein is 3-hydroxyacyl-[acyl-carrier-protein] dehydratase FabZ.